The primary structure comprises 307 residues: N-acetylmuramic acid 6-phosphate etherase (307 aa).

In terms of domain architecture, SIS spans 59–222; that stretch reads TADRLRQGGR…STGVMVKLGK (164 aa). The active-site Proton donor is Glu-87. Residue Glu-118 is part of the active site.

It belongs to the GCKR-like family. MurNAc-6-P etherase subfamily. As to quaternary structure, homodimer.

It carries out the reaction N-acetyl-D-muramate 6-phosphate + H2O = N-acetyl-D-glucosamine 6-phosphate + (R)-lactate. Its pathway is amino-sugar metabolism; N-acetylmuramate degradation. Functionally, specifically catalyzes the cleavage of the D-lactyl ether substituent of MurNAc 6-phosphate, producing GlcNAc 6-phosphate and D-lactate. In Nostoc sp. (strain PCC 7120 / SAG 25.82 / UTEX 2576), this protein is N-acetylmuramic acid 6-phosphate etherase.